A 216-amino-acid chain; its full sequence is LHFPL tetraspan subfamily member 3 protein (216 aa).

The next 4 helical transmembrane spans lie at 22–42 (IGVLWAIFTTLFAIVNVVCFV), 96–116 (FFIGMSMVLVLSCIGCFALFF), 126–146 (ICGWMQLAAGTCLVLGCMIYP), and 177–197 (ILAIMGILDALILSFLAFVLG).

It belongs to the LHFP family.

The protein resides in the membrane. This is LHFPL tetraspan subfamily member 3 protein from Danio rerio (Zebrafish).